We begin with the raw amino-acid sequence, 368 residues long: Quinolinate synthase (368 aa).

Positions 46 and 63 each coordinate iminosuccinate. C110 is a [4Fe-4S] cluster binding site. Residues 141-143 (YVN) and S162 contribute to the iminosuccinate site. C230 provides a ligand contact to [4Fe-4S] cluster. Residues 256–258 (HPE) and T273 each bind iminosuccinate. C320 serves as a coordination point for [4Fe-4S] cluster.

The protein belongs to the quinolinate synthase family. Type 3 subfamily. [4Fe-4S] cluster serves as cofactor.

It is found in the cytoplasm. It catalyses the reaction iminosuccinate + dihydroxyacetone phosphate = quinolinate + phosphate + 2 H2O + H(+). It participates in cofactor biosynthesis; NAD(+) biosynthesis; quinolinate from iminoaspartate: step 1/1. Catalyzes the condensation of iminoaspartate with dihydroxyacetone phosphate to form quinolinate. In Bacillus mycoides (strain KBAB4) (Bacillus weihenstephanensis), this protein is Quinolinate synthase.